A 396-amino-acid chain; its full sequence is Elongation factor Tu 1 (396 aa).

A tr-type G domain is found at 10 to 206; that stretch reads KPHVNVGTIG…TLDTYIPEPE (197 aa). Positions 19-26 are G1; sequence GHVDHGKT. 19–26 is a binding site for GTP; sequence GHVDHGKT. Position 26 (threonine 26) interacts with Mg(2+). Positions 60–64 are G2; that stretch reads GITIN. A G3 region spans residues 81 to 84; it reads DCPG. Residues 81 to 85 and 136 to 139 each bind GTP; these read DCPGH and NKCD. Residues 136–139 are G4; sequence NKCD. Residues 174 to 176 are G5; it reads SAL.

It belongs to the TRAFAC class translation factor GTPase superfamily. Classic translation factor GTPase family. EF-Tu/EF-1A subfamily. In terms of assembly, monomer.

The protein localises to the cytoplasm. The catalysed reaction is GTP + H2O = GDP + phosphate + H(+). In terms of biological role, GTP hydrolase that promotes the GTP-dependent binding of aminoacyl-tRNA to the A-site of ribosomes during protein biosynthesis. The protein is Elongation factor Tu 1 of Psychrobacter sp. (strain PRwf-1).